The primary structure comprises 474 residues: Alginate biosynthesis protein AlgX (474 aa).

The N-terminal stretch at Met1–Ala26 is a signal peptide. The tract at residues Ala27–Cys347 is SGNH hydrolase-like domain. A disulfide bridge connects residues Cys44 and Cys229. Residue Asp174 is part of the active site. Catalysis depends on His176, which acts as the Proton acceptor. The Nucleophile role is filled by Ser269. Cys347 and Cys460 are disulfide-bonded. The interval Ser348–Arg474 is CBM domain.

This sequence belongs to the AlgX family. As to quaternary structure, monomer. Interacts with AlgK and MucD.

It is found in the periplasm. It functions in the pathway glycan biosynthesis; alginate biosynthesis. In terms of biological role, plays two roles in the biosynthesis of the exopolysaccharide alginate: protects alginate from degradation as the polymer traverses the periplasm, and also plays a role in its O-acetylation. Acetylation of alginate causes the cells in the biofilm to adhere better to lung epithelium, form microcolonies, and resist the effects of the host immune system and/or antibiotics. Displays a low acetylesterase activity in vitro using a pseudosubstrate, 3-carboxyumbelliferyl acetate. Probably has acetyltransferase activity in vivo. The sequence is that of Alginate biosynthesis protein AlgX (algX) from Pseudomonas aeruginosa (strain ATCC 15692 / DSM 22644 / CIP 104116 / JCM 14847 / LMG 12228 / 1C / PRS 101 / PAO1).